The primary structure comprises 549 residues: Cation/acetate symporter ActP (549 aa).

13 consecutive transmembrane segments (helical) span residues 33-53 (WQAI…TYWA), 77-97 (LAIA…ALVF), 103-123 (GLIY…LIAE), 148-168 (ILSA…QMVG), 183-203 (IAVV…GMLA), 206-226 (WVQI…AFMV), 262-282 (ISAL…PHIL), 303-323 (GFMG…IMLV), 355-375 (LFLG…VAGL), 404-424 (VSKI…VLFE), 428-448 (IAFM…PIIL), 464-484 (GGWL…TIWV), and 493-513 (IFPY…GIWF).

Belongs to the sodium:solute symporter (SSF) (TC 2.A.21) family.

It is found in the cell inner membrane. In terms of biological role, transports acetate. The sequence is that of Cation/acetate symporter ActP from Escherichia coli O8 (strain IAI1).